The following is a 127-amino-acid chain: Glycine cleavage system H protein (127 aa).

Residues 24–106 (TVTVGITDHA…FEGAWIAKIK (83 aa)) form the Lipoyl-binding domain. K65 is modified (N6-lipoyllysine).

The protein belongs to the GcvH family. In terms of assembly, the glycine cleavage system is composed of four proteins: P, T, L and H. Requires (R)-lipoate as cofactor.

Its function is as follows. The glycine cleavage system catalyzes the degradation of glycine. The H protein shuttles the methylamine group of glycine from the P protein to the T protein. The protein is Glycine cleavage system H protein of Marinomonas sp. (strain MWYL1).